We begin with the raw amino-acid sequence, 166 residues long: Transcription factor HES-5 (166 aa).

The region spanning 16 to 72 (KNRLRKPVVEKMRRDRINSSIEQLKLLLEQEFARHQPNSKLEKADILEMAVSYLKHS) is the bHLH domain. Residues 88–119 (YSEGYSWCLQEAVQFLTLHAASDTQMKLLYHF) form the Orange domain. The interval 125 to 144 (APAAPAKEPKAPGAAPPPAL) is disordered. A WRPW motif motif is present at residues 163 to 166 (WRPW).

Transcription repression requires formation of a complex with a corepressor protein of the Groucho/TLE family. In terms of tissue distribution, expressed in fetal heart and brain tumors.

Its subcellular location is the nucleus. Its function is as follows. Transcriptional repressor of genes that require a bHLH protein for their transcription. Plays an important role as neurogenesis negative regulator. This is Transcription factor HES-5 (HES5) from Homo sapiens (Human).